The chain runs to 336 residues: Isopentenyl-diphosphate delta-isomerase (336 aa).

5 to 6 (RK) provides a ligand contact to substrate. Residues 60–62 (AMT), Ser90, and Asn117 each bind FMN. Gln147 contributes to the substrate binding site. Glu148 is a binding site for Mg(2+). FMN contacts are provided by residues Lys179, Ser204, Thr209, 253–255 (GVR), and 274–275 (SR).

The protein belongs to the IPP isomerase type 2 family. Homooctamer. Dimer of tetramers. Requires FMN as cofactor. It depends on NADPH as a cofactor. Mg(2+) serves as cofactor.

Its subcellular location is the cytoplasm. It carries out the reaction isopentenyl diphosphate = dimethylallyl diphosphate. Involved in the biosynthesis of isoprenoids. Catalyzes the 1,3-allylic rearrangement of the homoallylic substrate isopentenyl (IPP) to its allylic isomer, dimethylallyl diphosphate (DMAPP). The chain is Isopentenyl-diphosphate delta-isomerase from Streptococcus pneumoniae (strain ATCC BAA-255 / R6).